We begin with the raw amino-acid sequence, 369 residues long: MVALLGAGAISLVFTLFLTPLFIKLFHRLQWGQFIRDDGPQSHHTKRGTATMGGIVIILASVIGYFAGHLLTWDGIRFDPVTPSGLLVVFMMVGLGFVGFLDDYLKTRKQQSLGLGGWQKIAGQVIVATVFAVLAITLRDPVSGLTPASTAISLFRDLPLDFMALGAVIGTGLFIVWICLIVASASNGVNVADGLDGLAAGASIFSIGSYVIIGFWQFNQSCDSVSSYQNEYRCYEVASPLDLAIIAASIVGALIGFLWWNTSPAQIFMGDTGSLGLGGALAALAILSRTELLLVFIGGLFVIVAGSVVLQRAYFKITKGKRIFLMSPLHHHFELKGWAEVTVVVRFWIIAGLLVAAGVGTFYLEWITQ.

Transmembrane regions (helical) follow at residues 3–23, 53–73, 81–101, 118–138, 162–182, 198–218, 240–260, 267–287, 290–310, and 347–367; these read ALLG…PLFI, GGIV…LLTW, VTPS…VGFL, WQKI…AITL, FMAL…CLIV, LAAG…FWQF, PLDL…FLWW, IFMG…LAIL, TELL…SVVL, and FWII…LEWI.

Belongs to the glycosyltransferase 4 family. MraY subfamily. The cofactor is Mg(2+).

It localises to the cell membrane. It catalyses the reaction UDP-N-acetyl-alpha-D-muramoyl-L-alanyl-gamma-D-glutamyl-meso-2,6-diaminopimeloyl-D-alanyl-D-alanine + di-trans,octa-cis-undecaprenyl phosphate = di-trans,octa-cis-undecaprenyl diphospho-N-acetyl-alpha-D-muramoyl-L-alanyl-D-glutamyl-meso-2,6-diaminopimeloyl-D-alanyl-D-alanine + UMP. Its pathway is cell wall biogenesis; peptidoglycan biosynthesis. Catalyzes the initial step of the lipid cycle reactions in the biosynthesis of the cell wall peptidoglycan: transfers peptidoglycan precursor phospho-MurNAc-pentapeptide from UDP-MurNAc-pentapeptide onto the lipid carrier undecaprenyl phosphate, yielding undecaprenyl-pyrophosphoryl-MurNAc-pentapeptide, known as lipid I. In Clavibacter sepedonicus (Clavibacter michiganensis subsp. sepedonicus), this protein is Phospho-N-acetylmuramoyl-pentapeptide-transferase.